A 503-amino-acid polypeptide reads, in one-letter code: Apolipoprotein N-acyltransferase (503 aa).

Transmembrane regions (helical) follow at residues 13–32 (RWRGLVSLFLSVLSGFLTAL), 34–54 (MPGFLSGALIWFSLIPLLYAV), 63–83 (AFLSFVYFFTHVLISFFWVLP), 102–122 (IVVFVLMGIIEAVPFLGFGFL), 124–144 (YFAPQSIVLKTLYLASVYTIF), 173–193 (IVSITGTLGLVFLIVSLNVLF), and 203–223 (LLIFPVIFFVYLLNSSVVHLL). Positions 231 to 460 (FKVVALQPNV…RLAGEFHIKA (230 aa)) constitute a CN hydrolase domain. E273 functions as the Proton acceptor in the catalytic mechanism. K321 is a catalytic residue. C371 acts as the Nucleophile in catalysis. A helical membrane pass occupies residues 468–488 (VRYGDWFFYLSVILAVVSVFI).

This sequence belongs to the CN hydrolase family. Apolipoprotein N-acyltransferase subfamily.

The protein localises to the cell inner membrane. It carries out the reaction N-terminal S-1,2-diacyl-sn-glyceryl-L-cysteinyl-[lipoprotein] + a glycerophospholipid = N-acyl-S-1,2-diacyl-sn-glyceryl-L-cysteinyl-[lipoprotein] + a 2-acyl-sn-glycero-3-phospholipid + H(+). The protein operates within protein modification; lipoprotein biosynthesis (N-acyl transfer). Functionally, catalyzes the phospholipid dependent N-acylation of the N-terminal cysteine of apolipoprotein, the last step in lipoprotein maturation. The chain is Apolipoprotein N-acyltransferase from Thermotoga maritima (strain ATCC 43589 / DSM 3109 / JCM 10099 / NBRC 100826 / MSB8).